A 267-amino-acid chain; its full sequence is Kallikrein-14 (267 aa).

An N-terminal signal peptide occupies residues 1 to 34 (MSLRVLGSGTWPSAPKMFLLLTALQVLAIAMTQS). Positions 35 to 40 (QEDENK) are cleaved as a propeptide — activation peptide. Residues 41 to 265 (IIGGHTCTRS…YRSWIEETMR (225 aa)) form the Peptidase S1 domain. Intrachain disulfides connect Cys47–Cys180, Cys68–Cys84, Cys159–Cys226, Cys191–Cys205, and Cys216–Cys241. Active-site charge relay system residues include His83 and Asp127. The active-site Charge relay system is the Ser220.

This sequence belongs to the peptidase S1 family. Kallikrein subfamily. Post-translationally, proteolytic cleavage of the activation peptide produces the active enzyme. Highly expressed in CNS, bone marrow and fetal liver. Also expressed in breast, thyroid, kidney, colon, pancreas, spleen, prostate, uterus, small intestine, placenta and skeletal muscle. Among 40 tissues tested, the highest expression is detected in skin followed by breast and prostate (at protein level). Expressed in stratum corneum by sweat ducts and sweat glands and detected in sweat (at protein level).

It is found in the secreted. The protein localises to the extracellular space. Inhibited by SERPINA1, SERPINC1, SERPINE1, SERPINF2, aprotinin, soybean, trypsin inhibitor and leupeptin. Inhibited by serine protease inhibitor SPINK5. Has an autoproteolytic activity which may have a regulatory effect. Activated by citrate and inhibited by zinc and to a lower extent by manganese. Serine-type endopeptidase with a dual trypsin-like and chymotrypsin-like substrate specificity. May activate/inactivate the proteinase-activated receptors F2R, F2RL1 and F2RL3 and other kallikreins including KLK1, KLK3, KLK5 and KLK11. May function in seminal clot liquefaction through direct cleavage of the semenogelin SEMG1 and SEMG2 and activation of KLK3. May function through desmoglein DSG1 cleavage in epidermal desquamation a process by which the most superficial corneocytes are shed from the skin surface. May be involved in several aspects of tumor progression including growth, invasion and angiogenesis. The polypeptide is Kallikrein-14 (KLK14) (Homo sapiens (Human)).